We begin with the raw amino-acid sequence, 141 residues long: Subtilase cytotoxin subunit B (141 aa).

Positions methionine 1–alanine 23 are cleaved as a signal peptide. Residues methionine 33–serine 35 and glutamine 59 contribute to the N-glycoloyl-alpha-neuraminate site. The hydrophobic patch important for binding to SubA stretch occupies residues tyrosine 89–glycine 94. Tyrosine 101 provides a ligand contact to N-glycoloyl-alpha-neuraminate.

Forms a complex with SubA with the stoichiometry SubA1:SubB5 (called SubAB5). Each SubB subunit makes different contacts with the single SubA subunit. This subunit alone forms pentamers.

It is found in the secreted. The protein resides in the host cytoplasm. The protein localises to the host cytosol. It localises to the host endoplasmic reticulum lumen. In terms of biological role, receptor-binding subunit of subtilase cytotoxin SubAB5. Required for receptor-binding and thus correct trafficking in the host cell. Has specificity for host glycans terminating in the sialic acid N-glycolyl-alpha-neuraminic acid (Neu5Gc); each subunit in the SubB pentamer binds one Neu5Gc. The protease subunit (SubA) cleaves host BiP/HSPA5, inducing the host endoplasmic reticulum stress response and eventual cell death. Culture supernatant of E.coli expressing both subA and subB are toxic for Vero cells (African green monkey kidney cell line), Chinese hamster ovary cells and Hct-8 cells (human colonic epithelial cell line); the subunits are not toxic individually. Purified SubAB5 is highly toxic, &lt;0.1 pg is able to kill at least 50% of 30'000 Vero cells in a microtiter plate assay after 3 days; no cytotoxicity is seen at 24 hours. Preabsorption with cells expressing a ganglioside GM2 mimic reduced cytotoxicity of SubAB5 by 93% in the Vero cytotoxicity assay. Intraperitoneal injection of 200 ng of purified SubAB5 kills mice; the higher the dose the faster the mice die. Animals injected with purified SubAB5 have microvascular thrombi in the brain and other organs, including the renal tubules and glomeruli. Mice fed E.coli cells expressing cloned SubAB5 experience drastic weight loss and appear ill and lethargic. SubB alone at 2.5 ug/ml causes vacuolation of Vero cells, which requires the V-type ATPase proton pump; treated cells die. Protein synthesis in Vero cells is transiently inhibited by SubAB5; both subunits are required for this effect. Inhibition of protein synthesis is prevented by brefeldin A; cells are arrested in the G1 phase. SubAB5 at 100 ng/ml induced caspase-dependent apoptosis in Vero cells through mitochondrial membrane damage. In Escherichia coli, this protein is Subtilase cytotoxin subunit B.